We begin with the raw amino-acid sequence, 273 residues long: N(omega)-hydroxy-L-arginine amidinohydrolase (273 aa).

Mn(2+) is bound by residues Asp-109, His-111, Asp-113, Asp-198, and Asp-200.

The protein belongs to the arginase family. Mn(2+) serves as cofactor.

It catalyses the reaction N(omega)-hydroxy-L-arginine + H2O = hydroxyurea + L-ornithine. In terms of biological role, involved in the biosynthesis of the antibiotic D-cycloserine (DCS), a cyclic structural analog of D-alanine, used as an antitubercular agent. Catalyzes the hydrolysis of N(omega)-hydroxy-L-arginine (NHA) to yield hydroxyurea (HU) and L-ornithine. In Streptomyces lavendulae, this protein is N(omega)-hydroxy-L-arginine amidinohydrolase.